Consider the following 360-residue polypeptide: Photosystem II protein D1 (360 aa).

3 consecutive transmembrane segments (helical) span residues 29–46, 118–133, and 142–156; these read YIGWFGVLMIPCLLTATC, HFLIGVASYMGREWEL, and WICVAFSAPVAAATA. Residue His-118 participates in chlorophyll a binding. Tyr-126 contacts pheophytin a. [CaMn4O5] cluster-binding residues include Asp-170 and Glu-189. Residues 197–218 traverse the membrane as a helical segment; it reads FHMAGVAGVFGGALFSAMHGSL. His-198 contributes to the chlorophyll a binding site. Residues His-215 and 264–265 each bind a quinone; that span reads SF. His-215 contacts Fe cation. Residue His-272 participates in Fe cation binding. A helical transmembrane segment spans residues 274–288; it reads FLGAWPVVGIWLTAI. Residues His-332, Glu-333, Asp-342, and Ala-344 each coordinate [CaMn4O5] cluster. Residues 345–360 constitute a propeptide that is removed on maturation; sequence SNSVVPVALTAPSVEA.

This sequence belongs to the reaction center PufL/M/PsbA/D family. In terms of assembly, PSII is composed of 1 copy each of membrane proteins PsbA, PsbB, PsbC, PsbD, PsbE, PsbF, PsbH, PsbI, PsbJ, PsbK, PsbL, PsbM, PsbT, PsbX, PsbY, PsbZ, Psb30/Ycf12, at least 3 peripheral proteins of the oxygen-evolving complex and a large number of cofactors. It forms dimeric complexes. Requires The D1/D2 heterodimer binds P680, chlorophylls that are the primary electron donor of PSII, and subsequent electron acceptors. It shares a non-heme iron and each subunit binds pheophytin, quinone, additional chlorophylls, carotenoids and lipids. D1 provides most of the ligands for the Mn4-Ca-O5 cluster of the oxygen-evolving complex (OEC). There is also a Cl(-1) ion associated with D1 and D2, which is required for oxygen evolution. The PSII complex binds additional chlorophylls, carotenoids and specific lipids. as cofactor. Post-translationally, tyr-161 forms a radical intermediate that is referred to as redox-active TyrZ, YZ or Y-Z. C-terminally processed by CTPA; processing is essential to allow assembly of the oxygen-evolving complex and thus photosynthetic growth.

The protein resides in the plastid. The protein localises to the chloroplast thylakoid membrane. It catalyses the reaction 2 a plastoquinone + 4 hnu + 2 H2O = 2 a plastoquinol + O2. In terms of biological role, photosystem II (PSII) is a light-driven water:plastoquinone oxidoreductase that uses light energy to abstract electrons from H(2)O, generating O(2) and a proton gradient subsequently used for ATP formation. It consists of a core antenna complex that captures photons, and an electron transfer chain that converts photonic excitation into a charge separation. The D1/D2 (PsbA/PsbD) reaction center heterodimer binds P680, the primary electron donor of PSII as well as several subsequent electron acceptors. The sequence is that of Photosystem II protein D1 from Cyanidioschyzon merolae (strain NIES-3377 / 10D) (Unicellular red alga).